Here is a 134-residue protein sequence, read N- to C-terminus: Putative oxidoreductase CatD (134 aa).

Helical transmembrane passes span 5 to 25 (FEIG…VHGL), 46 to 66 (FMAY…FFGL), 70 to 90 (IVGV…KLKA), and 91 to 111 (PFMG…HLAL).

This sequence belongs to the DoxX family.

It is found in the cell membrane. Its function is as follows. Essential for growth and viability in the presence of catechol and probably involved in the detoxification of catechol. The protein is Putative oxidoreductase CatD (catD) of Bacillus subtilis (strain 168).